The primary structure comprises 270 residues: MPWKAIGIFDSGVGGLTVLKEIIKALPQEDTIYFGDTARVPYGTKSPETVTRYSLEIASFLVHRDIKLLVVACNTASACALEALQQTLSIPVVGVIEPGARRAAAVTRSGRVGVIGTEGTIRSSAYAKAIKRINPEVEVVTRACPLFVPLAEEGWTDNEVAHLTARTYLSGLREAGVDTLVLGCTHYPLLKRVIGETIGEEVKLVDSAEETARIVAEILRGGELLRPTSEQGNHHYFVSDVPAGFIRVGNRFLGGKLGDVYQVSLEAEKE.

Substrate contacts are provided by residues 10 to 11 (DS) and 42 to 43 (YG). Cysteine 73 functions as the Proton donor/acceptor in the catalytic mechanism. A substrate-binding site is contributed by 74 to 75 (NT). Cysteine 184 functions as the Proton donor/acceptor in the catalytic mechanism. A substrate-binding site is contributed by 185 to 186 (TH).

It belongs to the aspartate/glutamate racemases family.

It catalyses the reaction L-glutamate = D-glutamate. Its pathway is cell wall biogenesis; peptidoglycan biosynthesis. Its function is as follows. Provides the (R)-glutamate required for cell wall biosynthesis. In Geobacter metallireducens (strain ATCC 53774 / DSM 7210 / GS-15), this protein is Glutamate racemase.